Consider the following 113-residue polypeptide: Large ribosomal subunit protein uL22 (113 aa).

It belongs to the universal ribosomal protein uL22 family. Part of the 50S ribosomal subunit.

This protein binds specifically to 23S rRNA; its binding is stimulated by other ribosomal proteins, e.g. L4, L17, and L20. It is important during the early stages of 50S assembly. It makes multiple contacts with different domains of the 23S rRNA in the assembled 50S subunit and ribosome. Functionally, the globular domain of the protein is located near the polypeptide exit tunnel on the outside of the subunit, while an extended beta-hairpin is found that lines the wall of the exit tunnel in the center of the 70S ribosome. The sequence is that of Large ribosomal subunit protein uL22 from Bacillus subtilis (strain 168).